The primary structure comprises 211 residues: Uracil phosphoribosyltransferase (211 aa).

Residues R81, R106, and 133-141 contribute to the 5-phospho-alpha-D-ribose 1-diphosphate site; that span reads DPMLATGNS. Uracil is bound by residues I196 and 201–203; that span reads GDA. Position 202 (D202) interacts with 5-phospho-alpha-D-ribose 1-diphosphate.

It belongs to the UPRTase family. The cofactor is Mg(2+).

It carries out the reaction UMP + diphosphate = 5-phospho-alpha-D-ribose 1-diphosphate + uracil. Its pathway is pyrimidine metabolism; UMP biosynthesis via salvage pathway; UMP from uracil: step 1/1. Its activity is regulated as follows. Allosterically activated by GTP. Its function is as follows. Catalyzes the conversion of uracil and 5-phospho-alpha-D-ribose 1-diphosphate (PRPP) to UMP and diphosphate. This Myxococcus xanthus (strain DK1622) protein is Uracil phosphoribosyltransferase.